A 321-amino-acid chain; its full sequence is MANFKLFLALAACLSGQALAAPTKTIGKRAAITDVAHGYASQNGGTTGGAGGTTTTVSSYAQFTEAVSSDDAKIVIVDGTITETADQVKVGSNTSIIGKDANAILEGFGLLVKEKENVIIRNLGVKKVLADNGDAIGVQYSNNVWIDHCDVSSDRDHDKDYYDGLIDLTHAADYVTVSNTFVHDHWKAMLFGHSDSNGDEDTGHLRITVNNNYLNNLNSRGPSFRFGTGHLYNNYYLDVSDGINTRQGAQLLVEGNVWSGGKKPLYSTDDGYAVARDNDFGDGENTAPEGTLTSVPYEYDLLAASAVKDAVVGTAGQTLTF.

An N-terminal signal peptide occupies residues 1 to 20 (MANFKLFLALAACLSGQALA). Asparagine 93 carries an N-linked (GlcNAc...) asparagine glycan. Ca(2+) is bound by residues aspartate 134, aspartate 163, and aspartate 167. Arginine 220 is a catalytic residue.

It belongs to the polysaccharide lyase 1 family. Requires Ca(2+) as cofactor.

It is found in the secreted. The catalysed reaction is Eliminative cleavage of (1-&gt;4)-alpha-D-galacturonan to give oligosaccharides with 4-deoxy-alpha-D-galact-4-enuronosyl groups at their non-reducing ends.. Functionally, pectinolytic enzyme consist of four classes of enzymes: pectin lyase, polygalacturonase, pectin methylesterase and rhamnogalacturonase. Among pectinolytic enzymes, pectin lyase is the most important in depolymerization of pectin, since it cleaves internal glycosidic bonds of highly methylated pectins. Favors pectate, the anion, over pectin, the methyl ester. This chain is Probable pectate lyase A (plyA), found in Aspergillus flavus (strain ATCC 200026 / FGSC A1120 / IAM 13836 / NRRL 3357 / JCM 12722 / SRRC 167).